A 468-amino-acid polypeptide reads, in one-letter code: UDP-N-acetylmuramate--L-alanine ligase (468 aa).

112–118 (GTHGKTT) lines the ATP pocket.

Belongs to the MurCDEF family.

It is found in the cytoplasm. It carries out the reaction UDP-N-acetyl-alpha-D-muramate + L-alanine + ATP = UDP-N-acetyl-alpha-D-muramoyl-L-alanine + ADP + phosphate + H(+). The protein operates within cell wall biogenesis; peptidoglycan biosynthesis. Cell wall formation. In Neisseria meningitidis serogroup C (strain 053442), this protein is UDP-N-acetylmuramate--L-alanine ligase.